A 533-amino-acid polypeptide reads, in one-letter code: Beta-1,4 N-acetylgalactosaminyltransferase 1 (533 aa).

At 1–7 the chain is on the cytoplasmic side; the sequence is MRLDRRA. The helical; Signal-anchor for type II membrane protein transmembrane segment at 8 to 25 threads the bilayer; it reads LYALVLLLACASLGLLYA. The Lumenal segment spans residues 26-533; that stretch reads STRDAPGLPN…KHRLQCMTAE (508 aa). Residues Asn79 and Asn274 are each glycosylated (N-linked (GlcNAc...) asparagine). Residues Cys429 and Cys476 are joined by a disulfide bond.

It belongs to the glycosyltransferase 2 family. Homodimer; disulfide-linked. In terms of tissue distribution, strongly expressed in brain, testis, spleen, and to a lesser extent in liver.

The protein resides in the golgi apparatus membrane. The catalysed reaction is a ganglioside GM3 (d18:1(4E)) + UDP-N-acetyl-alpha-D-galactosamine = a ganglioside GM2 (d18:1(4E)) + UDP + H(+). It catalyses the reaction a ganglioside GD3 (d18:1(4E)) + UDP-N-acetyl-alpha-D-galactosamine = a ganglioside GD2 (d18:1(4E)) + UDP + H(+). The enzyme catalyses a ganglioside GM3 + UDP-N-acetyl-alpha-D-galactosamine = a ganglioside GM2 + UDP + H(+). It carries out the reaction a ganglioside GD3 + UDP-N-acetyl-alpha-D-galactosamine = a ganglioside GD2 + UDP + H(+). The catalysed reaction is a ganglioside GD1a + UDP-N-acetyl-alpha-D-galactosamine = a ganglioside GalNAc-GD1a + UDP + H(+). It catalyses the reaction a ganglioside GT3 (d18:1(4E)) + UDP-N-acetyl-alpha-D-galactosamine = a ganglioside GT2 (d18:1(4E)) + UDP + H(+). The enzyme catalyses a beta-D-Gal-(1-&gt;4)-beta-D-Glc-(1&lt;-&gt;1)-Cer(d18:1(4E)) + UDP-N-acetyl-alpha-D-galactosamine = a ganglioside GA2 (d18:1(4E)) + UDP + H(+). It carries out the reaction a neolactoside IV(3)-alpha-NeuGc-nLc4Cer + UDP-N-acetyl-alpha-D-galactosamine = a neolactoside IV(4)-beta-GalNAc-IV(3)-alpha-NeuGc-nLc4Cer + UDP + H(+). It functions in the pathway sphingolipid metabolism. Functionally, involved in the biosynthesis of gangliosides GM2, GD2, GT2 and GA2 from GM3, GD3, GT3 and GA3, respectively. This chain is Beta-1,4 N-acetylgalactosaminyltransferase 1, found in Rattus norvegicus (Rat).